The following is a 326-amino-acid chain: Cyclin-dependent kinase B2-1 (326 aa).

Positions 28–318 (YEKLEKVGEG…AKKAMEHPYF (291 aa)) constitute a Protein kinase domain. ATP-binding positions include 34-42 (VGEGTYGKV) and Lys57. Thr38 carries the post-translational modification Phosphothreonine. At Tyr39 the chain carries Phosphotyrosine. Catalysis depends on Asp159, which acts as the Proton acceptor. Thr193 bears the Phosphothreonine mark.

This sequence belongs to the protein kinase superfamily. CMGC Ser/Thr protein kinase family. CDC2/CDKX subfamily. As to quaternary structure, interacts with CYCB2-1 and CYCB2-2. Binding to CYCB2-1 or CYCB2-2 activates CDK kinase. As to expression, expressed in the dividing region of the root apex and the intercalary meristem of internodes.

The protein localises to the nucleus. Its subcellular location is the cytoplasm. It is found in the cytoskeleton. It localises to the spindle. The protein resides in the phragmoplast. The enzyme catalyses L-seryl-[protein] + ATP = O-phospho-L-seryl-[protein] + ADP + H(+). The catalysed reaction is L-threonyl-[protein] + ATP = O-phospho-L-threonyl-[protein] + ADP + H(+). It carries out the reaction [DNA-directed RNA polymerase] + ATP = phospho-[DNA-directed RNA polymerase] + ADP + H(+). Its function is as follows. Forms a complex with CYCB2-1 or CYCB2-2 that activates CDK kinase in tobacco BY2 cells during G2/M (mitosis) phases. May be involved in the regulation of the cell cycle at the G2/M transition. This is Cyclin-dependent kinase B2-1 (CDKB2-1) from Oryza sativa subsp. japonica (Rice).